The primary structure comprises 61 residues: Temporin-SN4 (61 aa).

Residues 1–22 (MFTLKKTLLLLFFLGTINLSLC) form the signal peptide. Residues 23-44 (EEERNAEEERRDGDDEMDVEVK) constitute a propeptide, removed in mature form. At K61 the chain carries Lysine amide.

Belongs to the frog skin active peptide (FSAP) family. Temporin subfamily. In terms of tissue distribution, expressed by the skin glands.

Its subcellular location is the secreted. Functionally, antimicrobial peptide. Active against some Gram-positive and Gram-negative bacterial strains. Active against fungus C.glabrata 090902 but not against C.albicans ATCC 12231. Shows weak hemolytic activity against human erythrocytes. The chain is Temporin-SN4 from Sylvirana spinulosa (Fine-spined frog).